Here is a 287-residue protein sequence, read N- to C-terminus: Probable 3-hydroxybutyryl-CoA dehydrogenase (287 aa).

The protein belongs to the 3-hydroxyacyl-CoA dehydrogenase family.

The enzyme catalyses (3S)-3-hydroxybutanoyl-CoA + NADP(+) = acetoacetyl-CoA + NADPH + H(+). It functions in the pathway lipid metabolism; butanoate metabolism. The sequence is that of Probable 3-hydroxybutyryl-CoA dehydrogenase (mmgB) from Bacillus subtilis (strain 168).